Reading from the N-terminus, the 125-residue chain is MWSVQQLLWGCRSLLTQGCRSFSLGSRDLRKMNFMPQPKNTDRWDHKRALYGVYDNIGILGDFKAHPRDLIIGPSWLRGWKGNELQRCIRKRQMVGPRMFYEDRENLNKRIRFLYKRFNRYGKHR.

Residues 1 to 29 constitute a mitochondrion transit peptide; it reads MWSVQQLLWGCRSLLTQGCRSFSLGSRDL.

It belongs to the mitochondrion-specific ribosomal protein mL51 family. In terms of assembly, component of the mitochondrial ribosome large subunit (39S) which comprises a 16S rRNA and about 50 distinct proteins.

The protein localises to the mitochondrion. This Xenopus tropicalis (Western clawed frog) protein is Large ribosomal subunit protein mL51 (mrpl51).